A 144-amino-acid chain; its full sequence is Transcriptional regulator MraZ (144 aa).

SpoVT-AbrB domains lie at 5–47 (EYDH…TLDE) and 76–119 (AVEV…DRET).

Belongs to the MraZ family. In terms of assembly, forms oligomers.

Its subcellular location is the cytoplasm. It is found in the nucleoid. The protein is Transcriptional regulator MraZ of Staphylococcus aureus.